The chain runs to 274 residues: 2,3,4,5-tetrahydropyridine-2,6-dicarboxylate N-succinyltransferase (274 aa).

Substrate-binding residues include R104 and D141.

Belongs to the transferase hexapeptide repeat family. Homotrimer.

The protein localises to the cytoplasm. It catalyses the reaction (S)-2,3,4,5-tetrahydrodipicolinate + succinyl-CoA + H2O = (S)-2-succinylamino-6-oxoheptanedioate + CoA. The protein operates within amino-acid biosynthesis; L-lysine biosynthesis via DAP pathway; LL-2,6-diaminopimelate from (S)-tetrahydrodipicolinate (succinylase route): step 1/3. This chain is 2,3,4,5-tetrahydropyridine-2,6-dicarboxylate N-succinyltransferase, found in Shewanella frigidimarina (strain NCIMB 400).